A 1382-amino-acid chain; its full sequence is DNA-directed RNA polymerase subunit beta (1382 aa).

This sequence belongs to the RNA polymerase beta chain family. The RNAP catalytic core consists of 2 alpha, 1 beta, 1 beta' and 1 omega subunit. When a sigma factor is associated with the core the holoenzyme is formed, which can initiate transcription.

The catalysed reaction is RNA(n) + a ribonucleoside 5'-triphosphate = RNA(n+1) + diphosphate. Functionally, DNA-dependent RNA polymerase catalyzes the transcription of DNA into RNA using the four ribonucleoside triphosphates as substrates. The chain is DNA-directed RNA polymerase subunit beta from Anaplasma marginale (strain Florida).